A 429-amino-acid polypeptide reads, in one-letter code: Histidine--tRNA ligase (429 aa).

Belongs to the class-II aminoacyl-tRNA synthetase family. In terms of assembly, homodimer.

The protein resides in the cytoplasm. The catalysed reaction is tRNA(His) + L-histidine + ATP = L-histidyl-tRNA(His) + AMP + diphosphate + H(+). The protein is Histidine--tRNA ligase of Stutzerimonas stutzeri (strain A1501) (Pseudomonas stutzeri).